The following is a 125-amino-acid chain: MADLNKLAEDIVGLTLLEAQELKTILKDKYGIEPAAGGAVMMAGPAAGAAAPAEEEKTEFDVGLTDAGANKINVIKEVRAITGLGLKEAKDLVEAGGKVKEAVAKADAEAMKKKLEEAGAKVELK.

The protein belongs to the bacterial ribosomal protein bL12 family. Homodimer. Part of the ribosomal stalk of the 50S ribosomal subunit. Forms a multimeric L10(L12)X complex, where L10 forms an elongated spine to which 2 to 4 L12 dimers bind in a sequential fashion. Binds GTP-bound translation factors.

In terms of biological role, forms part of the ribosomal stalk which helps the ribosome interact with GTP-bound translation factors. Is thus essential for accurate translation. The chain is Large ribosomal subunit protein bL12 from Cereibacter sphaeroides (Rhodobacter sphaeroides).